The sequence spans 274 residues: GPN-loop GTPase 3 (274 aa).

A GTP-binding site is contributed by 13-18 (GVGKST). The short motif at 70–72 (GPN) is the Gly-Pro-Asn (GPN)-loop; involved in dimer interface element. Position 173 to 176 (173 to 176 (SKID)) interacts with GTP. Residues 255-274 (SESQEPKEPVEEIEEEVDFE) form a disordered region. Over residues 265–274 (EEIEEEVDFE) the composition is skewed to acidic residues.

The protein belongs to the GPN-loop GTPase family. Heterodimers with GPN1 or GPN2. Binds to RNA polymerase II (RNAPII).

Small GTPase required for proper nuclear import of RNA polymerase II and III (RNAPII and RNAPIII). May act at an RNAP assembly step prior to nuclear import. The protein is GPN-loop GTPase 3 of Debaryomyces hansenii (strain ATCC 36239 / CBS 767 / BCRC 21394 / JCM 1990 / NBRC 0083 / IGC 2968) (Yeast).